The following is a 665-amino-acid chain: Golgi-associated RAB2B interactor protein 3 (665 aa).

Disordered stretches follow at residues 211 to 240 (EIRG…AGGE), 272 to 296 (AAAG…GTAG), and 480 to 590 (SEGY…GSVS). Positions 219–232 (NSRPQSSPTVSEAT) are enriched in polar residues. A compositionally biased stretch (basic and acidic residues) spans 499 to 513 (EAKEKRERREKDRTS). Basic residues-rich tracts occupy residues 514–538 (SRKS…RKTS) and 554–566 (GHGR…HSSS). The Bipartite nuclear localization signal motif lies at 515-531 (RKSSHHRRTGMSRHSSK). At serine 652 the chain carries Phosphoserine.

This sequence belongs to the GARIN family. As to quaternary structure, interacts (via N-terminus) with RAB2B (in GTP-bound form). Interacts with FRG1. Expressed in adult spermatocytes and spermatids.

The protein resides in the golgi apparatus. The protein localises to the nucleus. Its subcellular location is the cajal body. Its function is as follows. May be involved in RNA biogenesis. The protein is Golgi-associated RAB2B interactor protein 3 of Mus musculus (Mouse).